We begin with the raw amino-acid sequence, 379 residues long: Demethylspheroidene O-methyltransferase (379 aa).

2 residues coordinate S-adenosyl-L-methionine: Asp235 and Arg279.

Belongs to the class I-like SAM-binding methyltransferase superfamily. Cation-independent O-methyltransferase family.

The enzyme catalyses demethylspheroidene + S-adenosyl-L-methionine = spheroidene + S-adenosyl-L-homocysteine + H(+). It participates in carotenoid biosynthesis; spheroidene biosynthesis. Its function is as follows. Methyltransferase that mediates the O-methylation of 1-hydroxy carotenoids. Converts hydroxyneurosporene to methoxyneurosporene or demethylspheroidene to spheroidene. Also able to produce spirilloxanthin. This Cereibacter sphaeroides (strain ATCC 17023 / DSM 158 / JCM 6121 / CCUG 31486 / LMG 2827 / NBRC 12203 / NCIMB 8253 / ATH 2.4.1.) (Rhodobacter sphaeroides) protein is Demethylspheroidene O-methyltransferase (crtF).